We begin with the raw amino-acid sequence, 798 residues long: Iron-regulated transcriptional activator AFT2 (798 aa).

Disordered regions lie at residues 142 to 274, 331 to 365, 449 to 545, 642 to 718, and 748 to 798; these read RSNK…KKLK, YPQP…QENN, NVDL…LPGS, QQQQ…NNIN, and QGNP…GPGW. Residues 153–165 show a composition bias toward polar residues; that stretch reads EIANTPSVTSYSP. Low complexity predominate over residues 193 to 223; the sequence is STQSTRSSSSSDGSSIVSFGSLTSQSSSTSL. Over residues 256–274 the composition is skewed to basic residues; sequence PVKRKNMKANTMKKSKKLK. Residues 449-460 show a composition bias toward polar residues; sequence NVDLEQNGSNEN. Residues 476 to 517 show a composition bias toward low complexity; the sequence is ENQFSYQSQIQNQRQNQNQNQGQNQNQNQSQSQTPGQNSNQN. 2 stretches are compositionally biased toward polar residues: residues 518-543 and 646-656; these read DSQT…NWLP and PMFSMQNSGQQ. Low complexity-rich tracts occupy residues 657 to 695 and 705 to 718; these read LPPL…TLNP and NSTN…NNIN. Over residues 748–773 the composition is skewed to polar residues; that stretch reads QGNPTNSNQSMVNSIMTTNSNKDGTA. A compositionally biased stretch (low complexity) spans 774 to 789; the sequence is TSNNNSSGNTSNNLLN.

Its subcellular location is the nucleus. Transcription factor involved in iron metabolism, oxidative stress, surface adhesion, hyphal development and virulence. Functions as a negative regulator of MRS4 expression through the CACCC AFT-type sequence in a gene dose-dependent fashion. Acts as a repressor in flocculation, plastic adhesion, and surface hydrophobicity. The polypeptide is Iron-regulated transcriptional activator AFT2 (AFT2) (Candida albicans (strain SC5314 / ATCC MYA-2876) (Yeast)).